The chain runs to 236 residues: Snake venom serine protease ussurin (236 aa).

A Peptidase S1 domain is found at 1-227 (VIGGVECNIN…YTDWIQSIIS (227 aa)). A disulfide bond links C28 and C44. Residues H43 and D88 each act as charge relay system in the active site. N-linked (GlcNAc...) asparagine glycosylation is found at N99 and N100. Intrachain disulfides connect C120–C188, C152–C167, and C178–C203. S182 (charge relay system) is an active-site residue.

Belongs to the peptidase S1 family. Snake venom subfamily. Monomer. In terms of tissue distribution, expressed by the venom gland.

Its subcellular location is the secreted. Functionally, snake venom serine protease that may act in the hemostasis system of the prey. This Gloydius ussuriensis (Ussuri mamushi) protein is Snake venom serine protease ussurin.